Reading from the N-terminus, the 224-residue chain is Flagellar L-ring protein (224 aa).

An N-terminal signal peptide occupies residues 1–15 (MARYLVLAVALLLAA). Cysteine 16 is lipidated: N-palmitoyl cysteine. The S-diacylglycerol cysteine moiety is linked to residue cysteine 16.

It belongs to the FlgH family. The basal body constitutes a major portion of the flagellar organelle and consists of four rings (L,P,S, and M) mounted on a central rod.

The protein resides in the cell outer membrane. It is found in the bacterial flagellum basal body. Its function is as follows. Assembles around the rod to form the L-ring and probably protects the motor/basal body from shearing forces during rotation. This is Flagellar L-ring protein from Shewanella baltica (strain OS185).